Here is a 156-residue protein sequence, read N- to C-terminus: MAPKAKKEAPAPPKVEAKAKALKAKKAVLKGVHSHKKKKIRTSPTFRRPKTLRLRRQPKYPRKSAPRRNKLDHYAIIKFPLTTESAMKKIEDNNTLVFIVDVKANKHQIKQAVKKLYDIDVAKVNTLIRPDGEKKAYVRLAPDYDALDVANKIGII.

Residues 1–19 (MAPKAKKEAPAPPKVEAKA) are compositionally biased toward basic and acidic residues. The disordered stretch occupies residues 1-67 (MAPKAKKEAP…PKYPRKSAPR (67 aa)). Alanine 2 bears the N,N,N-trimethylalanine mark. Lysine 14 is covalently cross-linked (Glycyl lysine isopeptide (Lys-Gly) (interchain with G-Cter in SUMO2)). Residues 20–67 (KALKAKKAVLKGVHSHKKKKIRTSPTFRRPKTLRLRRQPKYPRKSAPR) are compositionally biased toward basic residues. A beta-like import receptor binding (BIB) domain region spans residues 32–74 (VHSHKKKKIRTSPTFRRPKTLRLRRQPKYPRKSAPRRNKLDHY). A Citrulline modification is found at arginine 41. The residue at position 43 (serine 43) is a Phosphoserine. The residue at position 45 (threonine 45) is a Phosphothreonine. Position 70 is an N6-acetyllysine (lysine 70).

The protein belongs to the universal ribosomal protein uL23 family. As to quaternary structure, component of the large ribosomal subunit. Interacts with LYAR and GNL2. Interacts with MDM2; this interaction may promote MDM2-mediated p53/TP53 polyubiquitination. Directly interacts (via BIB domain) with IPO5, IPO7, KPNB1 and TNPO1; these interactions are involved in RPL23A nuclear import for the assembly of ribosomal subunits. Interacts with IPO8. In terms of processing, N-terminus is methylated by METTL11A/NTM1. Post-translationally, citrullinated by PADI4.

It is found in the cytoplasm. It localises to the nucleus. Its function is as follows. Component of the large ribosomal subunit. The ribosome is a large ribonucleoprotein complex responsible for the synthesis of proteins in the cell. Binds a specific region on the 26S rRNA. May promote p53/TP53 degradation possibly through the stimulation of MDM2-mediated TP53 polyubiquitination. This Oryctolagus cuniculus (Rabbit) protein is Large ribosomal subunit protein uL23 (RPL23A).